Here is a 422-residue protein sequence, read N- to C-terminus: uncharacterized protein (422 aa).

A signal peptide spans 1–23 (MLSLIPFTVCAFLALITSKGGSA).

As to expression, component of the acid-insoluble organic matrix of the aragonitic skeleton (at protein level).

It is found in the secreted. This is an uncharacterized protein from Acropora millepora (Staghorn coral).